Consider the following 439-residue polypeptide: FK506-binding protein 59 (439 aa).

PPIase FKBP-type domains follow at residues G32–K120 and G149–G235. TPR repeat units follow at residues A252–T285, V297–N330, and V331–N364.

Interacts with inaD and trpl, and may be part of the inaD signaling complex. As to expression, expression in the embryo is limited to three tissues: lymph glands, Garland cells and oenocyte cells.

It carries out the reaction [protein]-peptidylproline (omega=180) = [protein]-peptidylproline (omega=0). Functionally, may have a role in phototransduction; inhibits or prevents Ca(2+) induced stimulation of the trpl ion channel. In Drosophila melanogaster (Fruit fly), this protein is FK506-binding protein 59.